The following is a 607-amino-acid chain: Terpenoid synthase 29 (607 aa).

Mg(2+) is bound by residues D358, D362, N502, T506, and E510. The short motif at 358 to 362 (DDTYD) is the DDXXD motif element.

The protein belongs to the terpene synthase family. Tpsa subfamily. Requires Mg(2+) as cofactor. It depends on Mn(2+) as a cofactor. As to expression, predominantly expressed in flowers but also in siliques, roots, leaves and stems.

Its subcellular location is the cytoplasm. It functions in the pathway secondary metabolite biosynthesis; terpenoid biosynthesis. This is Terpenoid synthase 29 (TPS29) from Arabidopsis thaliana (Mouse-ear cress).